We begin with the raw amino-acid sequence, 315 residues long: Lipase 3 (315 aa).

An N-terminal signal peptide occupies residues 1–18 (MLLKRLGLAALFSLSMVG). Cys-19 carries N-palmitoyl cysteine lipidation. Cys-19 is lipidated: S-diacylglycerol cysteine. The 228-residue stretch at 69-296 (PLLLIHGFGG…MNDVGHVPMV (228 aa)) folds into the AB hydrolase-1 domain. His-74 is a catalytic residue. Residue Ser-142 is the Charge relay system of the active site.

The protein belongs to the lipase/esterase LIP3/BchO family.

The protein localises to the cell membrane. It carries out the reaction a triacylglycerol + H2O = a diacylglycerol + a fatty acid + H(+). This Moraxella sp. (strain TA144) protein is Lipase 3 (lip3).